Reading from the N-terminus, the 61-residue chain is Acetylcholinesterase toxin C (61 aa).

4 disulfide bridges follow: cysteine 3-cysteine 22, cysteine 17-cysteine 39, cysteine 41-cysteine 52, and cysteine 53-cysteine 59.

Belongs to the three-finger toxin family. Short-chain subfamily. Acn-esterase inhibitor sub-subfamily. Expressed by the venom gland.

It is found in the secreted. Inhibits acetylcholinesterase. In Dendroaspis polylepis polylepis (Black mamba), this protein is Acetylcholinesterase toxin C.